Reading from the N-terminus, the 147-residue chain is Prefoldin subunit alpha (147 aa).

The protein belongs to the prefoldin alpha subunit family. As to quaternary structure, heterohexamer of two alpha and four beta subunits.

The protein localises to the cytoplasm. In terms of biological role, molecular chaperone capable of stabilizing a range of proteins. Seems to fulfill an ATP-independent, HSP70-like function in archaeal de novo protein folding. In Saccharolobus islandicus (strain M.16.27) (Sulfolobus islandicus), this protein is Prefoldin subunit alpha.